The primary structure comprises 768 residues: Ribosomal RNA large subunit methyltransferase K/L (768 aa).

Residues 60-175 (DLYKICLWSR…DKQAELYLDL (116 aa)) enclose the THUMP domain.

Belongs to the methyltransferase superfamily. RlmKL family.

The protein resides in the cytoplasm. The catalysed reaction is guanosine(2445) in 23S rRNA + S-adenosyl-L-methionine = N(2)-methylguanosine(2445) in 23S rRNA + S-adenosyl-L-homocysteine + H(+). It carries out the reaction guanosine(2069) in 23S rRNA + S-adenosyl-L-methionine = N(2)-methylguanosine(2069) in 23S rRNA + S-adenosyl-L-homocysteine + H(+). Its function is as follows. Specifically methylates the guanine in position 2445 (m2G2445) and the guanine in position 2069 (m7G2069) of 23S rRNA. This chain is Ribosomal RNA large subunit methyltransferase K/L, found in Psychrobacter arcticus (strain DSM 17307 / VKM B-2377 / 273-4).